Here is a 428-residue protein sequence, read N- to C-terminus: Anaerobic glycerol-3-phosphate dehydrogenase subunit B (428 aa).

The protein belongs to the anaerobic G-3-P dehydrogenase subunit B family. In terms of assembly, composed of a catalytic GlpA/B dimer and of membrane bound GlpC. FMN serves as cofactor.

It catalyses the reaction a quinone + sn-glycerol 3-phosphate = dihydroxyacetone phosphate + a quinol. The protein operates within polyol metabolism; glycerol degradation via glycerol kinase pathway; glycerone phosphate from sn-glycerol 3-phosphate (anaerobic route): step 1/1. Functionally, conversion of glycerol 3-phosphate to dihydroxyacetone. Uses fumarate or nitrate as electron acceptor. This is Anaerobic glycerol-3-phosphate dehydrogenase subunit B from Actinobacillus pleuropneumoniae serotype 5b (strain L20).